The sequence spans 104 residues: Succinate dehydrogenase assembly factor 4, mitochondrial (104 aa).

The transit peptide at 1–30 (MVSTTLSVSRMTFVWRAARPSLLNHSLRKM) directs the protein to the mitochondrion. Positions 29-104 (KMSYQEGKPE…WERKGRCIDF (76 aa)) are disordered. Basic and acidic residues-rich tracts occupy residues 63-83 (EREP…EKGG) and 91-104 (RYGD…CIDF).

This sequence belongs to the SDHAF4 family. Interacts with Sdha in its FAD-bound form.

It localises to the mitochondrion matrix. Plays an essential role in the assembly of succinate dehydrogenase (SDH), an enzyme complex (also referred to as respiratory complex II) that is a component of both the tricarboxylic acid (TCA) cycle and the mitochondrial electron transport chain, and which couples the oxidation of succinate to fumarate with the reduction of ubiquinone (coenzyme Q) to ubiquinol. Binds to the flavoprotein subunit Sdha in its FAD-bound form, blocking the generation of excess reactive oxygen species (ROS) and facilitating its assembly with the iron-sulfur protein subunit Sdhb into the SDH catalytic dimer. The sequence is that of Succinate dehydrogenase assembly factor 4, mitochondrial from Mus musculus (Mouse).